The sequence spans 333 residues: Homocysteine S-methyltransferase 2 (333 aa).

Residues 8–327 (SMKDFLKQTG…TTIRAIHKRL (320 aa)) form the Hcy-binding domain. Residues C245, C312, and C313 each coordinate Zn(2+).

As to quaternary structure, monomer. The cofactor is Zn(2+). As to expression, expressed predominantly in roots. Expressed in rosette leaves, cauline leaves and developing seeds.

It carries out the reaction S-methyl-L-methionine + L-homocysteine = 2 L-methionine + H(+). Its function is as follows. Catalyzes methyl transfer from S-methylmethionine (SMM) to adenosyl-L-homocysteine (AdoMet). SMM degradation (by HMT-1, HMT-2 and HMT-3) and biosynthesis (by MMT1) constitute the SMM cycle in plants, which is probably required to achieve short term control of AdoMet level. The chain is Homocysteine S-methyltransferase 2 (HMT-2) from Arabidopsis thaliana (Mouse-ear cress).